Here is a 341-residue protein sequence, read N- to C-terminus: NADH-quinone oxidoreductase subunit H (341 aa).

8 helical membrane passes run Leu-6–Tyr-26, Leu-76–Ile-96, Val-118–Gly-138, Val-157–Ser-177, Leu-198–Val-218, Phe-252–Gly-272, Phe-278–Trp-298, and Gly-313–Val-333.

This sequence belongs to the complex I subunit 1 family. In terms of assembly, NDH-1 is composed of 14 different subunits. Subunits NuoA, H, J, K, L, M, N constitute the membrane sector of the complex.

Its subcellular location is the cell membrane. It carries out the reaction a quinone + NADH + 5 H(+)(in) = a quinol + NAD(+) + 4 H(+)(out). Its function is as follows. NDH-1 shuttles electrons from NADH, via FMN and iron-sulfur (Fe-S) centers, to quinones in the respiratory chain. The immediate electron acceptor for the enzyme in this species is believed to be ubiquinone. Couples the redox reaction to proton translocation (for every two electrons transferred, four hydrogen ions are translocated across the cytoplasmic membrane), and thus conserves the redox energy in a proton gradient. This subunit may bind ubiquinone. This Thermomicrobium roseum (strain ATCC 27502 / DSM 5159 / P-2) protein is NADH-quinone oxidoreductase subunit H.